The sequence spans 151 residues: UPF0102 protein Ava_4800 (151 aa).

Belongs to the UPF0102 family.

The polypeptide is UPF0102 protein Ava_4800 (Trichormus variabilis (strain ATCC 29413 / PCC 7937) (Anabaena variabilis)).